We begin with the raw amino-acid sequence, 189 residues long: Small ribosomal subunit protein uS5 (189 aa).

An S5 DRBM domain is found at 22–85 (FVDKLVAINR…EAAKRELIFV (64 aa)).

It belongs to the universal ribosomal protein uS5 family. In terms of assembly, part of the 30S ribosomal subunit. Contacts proteins S4 and S8.

With S4 and S12 plays an important role in translational accuracy. In terms of biological role, located at the back of the 30S subunit body where it stabilizes the conformation of the head with respect to the body. This chain is Small ribosomal subunit protein uS5, found in Rhizobium johnstonii (strain DSM 114642 / LMG 32736 / 3841) (Rhizobium leguminosarum bv. viciae).